The following is a 263-amino-acid chain: uncharacterized protein (263 aa).

A disordered region spans residues 183–263 (APHDRPEGVP…PPSTNTKGAA (81 aa)). Composition is skewed to polar residues over residues 230–239 (SRPTAPSRPS) and 253–263 (TPPSTNTKGAA).

In terms of biological role, probably does not play a direct role in plasmid integration or excision. This is an uncharacterized protein from Saccharopolyspora erythraea (Streptomyces erythraeus).